The following is a 140-amino-acid chain: Large ribosomal subunit protein bL17 (140 aa).

The protein belongs to the bacterial ribosomal protein bL17 family. Part of the 50S ribosomal subunit. Contacts protein L32.

The chain is Large ribosomal subunit protein bL17 from Beijerinckia indica subsp. indica (strain ATCC 9039 / DSM 1715 / NCIMB 8712).